The sequence spans 95 residues: DNA-directed RNA polymerase subunit Rpo11 (95 aa).

The protein belongs to the archaeal Rpo11/eukaryotic RPB11/RPC19 RNA polymerase subunit family. In terms of assembly, part of the RNA polymerase complex.

It is found in the cytoplasm. It carries out the reaction RNA(n) + a ribonucleoside 5'-triphosphate = RNA(n+1) + diphosphate. Its function is as follows. DNA-dependent RNA polymerase (RNAP) catalyzes the transcription of DNA into RNA using the four ribonucleoside triphosphates as substrates. The polypeptide is DNA-directed RNA polymerase subunit Rpo11 (Pyrococcus furiosus (strain ATCC 43587 / DSM 3638 / JCM 8422 / Vc1)).